The chain runs to 271 residues: Cartilage-associated protein (271 aa).

Positions 1 to 15 are cleaved as a signal peptide; that stretch reads MWRTLLAALLATAGA. Asn76 carries an N-linked (GlcNAc...) asparagine glycan.

It belongs to the leprecan family. Found in articular chondrocytes. Expressed in a variety of tissues.

It localises to the secreted. It is found in the extracellular space. The protein localises to the extracellular matrix. Necessary for efficient 3-hydroxylation of fibrillar collagen prolyl residues. The protein is Cartilage-associated protein (CRTAP) of Gallus gallus (Chicken).